Reading from the N-terminus, the 471-residue chain is Putative multidrug resistance protein MdtD (471 aa).

At 1-11 (MTDLPDSTRWQ) the chain is on the periplasmic side. Residues 12 to 32 (LWIVAFGFFMQSLDTTIVNTA) traverse the membrane as a helical segment. Residues 33–48 (LPSMAQSLGESPLHMH) lie on the Cytoplasmic side of the membrane. Residues 49–69 (MVIVSYVLTVAVMLPASGWLA) traverse the membrane as a helical segment. Residues 70 to 76 (DKVGVRN) lie on the Periplasmic side of the membrane. A helical membrane pass occupies residues 77 to 97 (IFFTAIVLFTLGSLFCALSGT). The Cytoplasmic segment spans residues 98–101 (LNEL). A helical transmembrane segment spans residues 102–124 (LLARALQGVGGAMMVPVGRLTVM). Over 125-137 (KIVPREQYMAAMT) the chain is Periplasmic. A helical transmembrane segment spans residues 138–158 (FVTLPGQVGPLLGPALGGLLV). Residues 159–164 (EYASWH) lie on the Cytoplasmic side of the membrane. The chain crosses the membrane as a helical span at residues 165–185 (WIFLINIPVGIIGAIATLMLM). Residues 186–196 (PNYTMQTRRFD) are Periplasmic-facing. A helical membrane pass occupies residues 197 to 217 (LSGFLLLAVGMAVLTLALDGS). The Cytoplasmic segment spans residues 218–224 (KGTGLSP). The helical transmembrane segment at 225–245 (LAIAGLVAVGVVALVLYLLHA) threads the bilayer. Residues 246-262 (RNNNRALFSLKLFRTRT) are Periplasmic-facing. A helical membrane pass occupies residues 263 to 283 (FSLGLAGSFAGRIGSGMLPFM). Residues 284–285 (TP) are Cytoplasmic-facing. A helical membrane pass occupies residues 286–306 (VFLQIGLGFSPFHAGLMMIPM). Residues 307–341 (VLGSMGMKRIVVQVVNRFGYRRVLVATTLGLSLVT) are Periplasmic-facing. The helical transmembrane segment at 342–362 (LLFMTTALLGWYYVLPFVLFL) threads the bilayer. Over 363-395 (QGMVNSTRFSSMNTLTLKDLPDNLASSGNSLLS) the chain is Cytoplasmic. The chain crosses the membrane as a helical span at residues 396-416 (MIMQLSMSIGVTIAGLLLGLF). At 417-430 (GSQHVSVDSGTTQT) the chain is on the periplasmic side. A helical membrane pass occupies residues 431–451 (VFMYTWLSMAFIIALPAFIFA). The Cytoplasmic portion of the chain corresponds to 452–471 (RVPNDTHQNVAISRRKRSAQ).

Belongs to the major facilitator superfamily. TCR/Tet family.

It is found in the cell inner membrane. The protein is Putative multidrug resistance protein MdtD of Escherichia coli (strain SMS-3-5 / SECEC).